A 465-amino-acid polypeptide reads, in one-letter code: 23S rRNA (uracil(1939)-C(5))-methyltransferase RlmD (465 aa).

The interval 1–22 (MSEAVPTSARKSKNAPVAPGPA) is disordered. The 65-residue stretch at 16 to 80 (PVAPGPAPVL…PSYEQATVVD (65 aa)) folds into the TRAM domain. [4Fe-4S] cluster-binding residues include Cys93, Cys99, Cys102, and Cys181. 6 residues coordinate S-adenosyl-L-methionine: Gln289, Phe318, Asn323, Glu339, Asn367, and Asp388. Cys421 (nucleophile) is an active-site residue.

It belongs to the class I-like SAM-binding methyltransferase superfamily. RNA M5U methyltransferase family. RlmD subfamily.

The catalysed reaction is uridine(1939) in 23S rRNA + S-adenosyl-L-methionine = 5-methyluridine(1939) in 23S rRNA + S-adenosyl-L-homocysteine + H(+). In terms of biological role, catalyzes the formation of 5-methyl-uridine at position 1939 (m5U1939) in 23S rRNA. This chain is 23S rRNA (uracil(1939)-C(5))-methyltransferase RlmD, found in Burkholderia ambifaria (strain ATCC BAA-244 / DSM 16087 / CCUG 44356 / LMG 19182 / AMMD) (Burkholderia cepacia (strain AMMD)).